A 109-amino-acid chain; its full sequence is Tyrosine-protein phosphatase 4 (109 aa).

Residues 1 to 109 form the Tyrosine-protein phosphatase domain; sequence SKSASIVMLT…QNSGNHPIVI (109 aa). Residue Glu78 participates in substrate binding.

The protein belongs to the protein-tyrosine phosphatase family.

It catalyses the reaction O-phospho-L-tyrosyl-[protein] + H2O = L-tyrosyl-[protein] + phosphate. The polypeptide is Tyrosine-protein phosphatase 4 (STY-4) (Styela plicata (Wrinkled sea squirt)).